Consider the following 372-residue polypeptide: Spermidine/putrescine import ATP-binding protein PotA (372 aa).

The ABC transporter domain occupies 12-250 (VSIRSVRKVY…PRNRFVADFI (239 aa)). Residue 48 to 55 (GPSGCGKT) participates in ATP binding.

The protein belongs to the ABC transporter superfamily. Spermidine/putrescine importer (TC 3.A.1.11.1) family. The complex is composed of two ATP-binding proteins (PotA), two transmembrane proteins (PotB and PotC) and a solute-binding protein (PotD).

It localises to the cell inner membrane. It catalyses the reaction ATP + H2O + polyamine-[polyamine-binding protein]Side 1 = ADP + phosphate + polyamineSide 2 + [polyamine-binding protein]Side 1.. In terms of biological role, part of the ABC transporter complex PotABCD involved in spermidine/putrescine import. Responsible for energy coupling to the transport system. This chain is Spermidine/putrescine import ATP-binding protein PotA, found in Pseudomonas fluorescens (strain ATCC BAA-477 / NRRL B-23932 / Pf-5).